The primary structure comprises 321 residues: Phospho-N-acetylmuramoyl-pentapeptide-transferase (321 aa).

A run of 10 helical transmembrane segments spans residues 6-26 (MLIP…LFIG), 53-73 (TMGG…VGIW), 77-97 (LTLS…LGFY), 121-141 (ILGA…HTLW), 144-164 (IIGN…WLVG), 175-195 (LDGL…IIAA), 200-220 (TDVL…LMFN), 226-246 (IFMG…VAIL), 251-271 (WSLL…ILQV), and 301-321 (IDLT…AFFL).

It belongs to the glycosyltransferase 4 family. MraY subfamily. The cofactor is Mg(2+).

The protein resides in the cell membrane. It catalyses the reaction UDP-N-acetyl-alpha-D-muramoyl-L-alanyl-gamma-D-glutamyl-L-lysyl-D-alanyl-D-alanine + di-trans,octa-cis-undecaprenyl phosphate = Mur2Ac(oyl-L-Ala-gamma-D-Glu-L-Lys-D-Ala-D-Ala)-di-trans,octa-cis-undecaprenyl diphosphate + UMP. It functions in the pathway cell wall biogenesis; peptidoglycan biosynthesis. Functionally, catalyzes the initial step of the lipid cycle reactions in the biosynthesis of the cell wall peptidoglycan: transfers peptidoglycan precursor phospho-MurNAc-pentapeptide from UDP-MurNAc-pentapeptide onto the lipid carrier undecaprenyl phosphate, yielding undecaprenyl-pyrophosphoryl-MurNAc-pentapeptide, known as lipid I. This Lacticaseibacillus paracasei (strain ATCC 334 / BCRC 17002 / CCUG 31169 / CIP 107868 / KCTC 3260 / NRRL B-441) (Lactobacillus paracasei) protein is Phospho-N-acetylmuramoyl-pentapeptide-transferase.